A 465-amino-acid polypeptide reads, in one-letter code: UDP-N-acetylmuramate--L-alanine ligase (465 aa).

115 to 121 (GAHGKTT) is a binding site for ATP.

The protein belongs to the MurCDEF family.

It localises to the cytoplasm. The catalysed reaction is UDP-N-acetyl-alpha-D-muramate + L-alanine + ATP = UDP-N-acetyl-alpha-D-muramoyl-L-alanine + ADP + phosphate + H(+). It participates in cell wall biogenesis; peptidoglycan biosynthesis. Its function is as follows. Cell wall formation. The sequence is that of UDP-N-acetylmuramate--L-alanine ligase from Coxiella burnetii (strain CbuK_Q154) (Coxiella burnetii (strain Q154)).